The primary structure comprises 447 residues: Signal recognition particle 54 kDa protein (447 aa).

Residues 103 to 110, 185 to 189, and 245 to 248 contribute to the GTP site; these read GVQGSGKT, DTAGR, and TKMD.

This sequence belongs to the GTP-binding SRP family. SRP54 subfamily. In terms of assembly, part of the signal recognition particle protein translocation system, which is composed of SRP and FtsY. Archaeal SRP consists of a 7S RNA molecule of 300 nucleotides and two protein subunits: SRP54 and SRP19.

Its subcellular location is the cytoplasm. It carries out the reaction GTP + H2O = GDP + phosphate + H(+). Functionally, involved in targeting and insertion of nascent membrane proteins into the cytoplasmic membrane. Binds to the hydrophobic signal sequence of the ribosome-nascent chain (RNC) as it emerges from the ribosomes. The SRP-RNC complex is then targeted to the cytoplasmic membrane where it interacts with the SRP receptor FtsY. This is Signal recognition particle 54 kDa protein from Saccharolobus islandicus (strain L.S.2.15 / Lassen #1) (Sulfolobus islandicus).